We begin with the raw amino-acid sequence, 150 residues long: Small ribosomal subunit protein uS13 (150 aa).

This sequence belongs to the universal ribosomal protein uS13 family. As to quaternary structure, part of the 30S ribosomal subunit. Forms a loose heterodimer with protein S19. Forms two bridges to the 50S subunit in the 70S ribosome.

In terms of biological role, located at the top of the head of the 30S subunit, it contacts several helices of the 16S rRNA. In the 70S ribosome it contacts the 23S rRNA (bridge B1a) and protein L5 of the 50S subunit (bridge B1b), connecting the 2 subunits; these bridges are implicated in subunit movement. The polypeptide is Small ribosomal subunit protein uS13 (Methanocorpusculum labreanum (strain ATCC 43576 / DSM 4855 / Z)).